The chain runs to 46 residues: Defensin-1 (46 aa).

Cystine bridges form between Cys3/Cys46, Cys14/Cys35, Cys20/Cys40, and Cys24/Cys42.

It belongs to the DEFL family. In terms of tissue distribution, epidermis and vascular bundles of pods, stems, roots, leaves and wet or dry seeds.

Possesses antifungal activity sensitive to inorganic cations. This chain is Defensin-1, found in Pisum sativum (Garden pea).